The sequence spans 242 residues: Caffeoyl-CoA O-methyltransferase (242 aa).

Lysine 16 provides a ligand contact to substrate. Residues threonine 58, glutamate 80, 82 to 83 (GV), serine 88, aspartate 106, and alanine 135 contribute to the S-adenosyl-L-methionine site. Aspartate 158 is a binding site for substrate. Aspartate 158 is a binding site for a divalent metal cation. Aspartate 160 provides a ligand contact to S-adenosyl-L-methionine. 2 residues coordinate a divalent metal cation: aspartate 184 and asparagine 185. Residue asparagine 189 participates in substrate binding.

Belongs to the class I-like SAM-binding methyltransferase superfamily. Cation-dependent O-methyltransferase family. CCoAMT subfamily. A divalent metal cation is required as a cofactor.

It catalyses the reaction (E)-caffeoyl-CoA + S-adenosyl-L-methionine = (E)-feruloyl-CoA + S-adenosyl-L-homocysteine + H(+). It functions in the pathway aromatic compound metabolism; phenylpropanoid biosynthesis. Functionally, methylates caffeoyl-CoA to feruloyl-CoA and 5-hydroxyferuloyl-CoA to sinapoyl-CoA. Plays a role in the synthesis of feruloylated polysaccharides. Involved in the reinforcement of the plant cell wall. Also involved in the responding to wounding or pathogen challenge by the increased formation of cell wall-bound ferulic acid polymers. This Solanum tuberosum (Potato) protein is Caffeoyl-CoA O-methyltransferase (CCOAOMT).